The sequence spans 381 residues: Succinyl-diaminopimelate desuccinylase (381 aa).

Residue H76 participates in Zn(2+) binding. D78 is a catalytic residue. D107 serves as a coordination point for Zn(2+). Catalysis depends on E140, which acts as the Proton acceptor. Zn(2+) is bound by residues E141, E169, and H354.

The protein belongs to the peptidase M20A family. DapE subfamily. In terms of assembly, homodimer. The cofactor is Zn(2+). Co(2+) serves as cofactor.

It catalyses the reaction N-succinyl-(2S,6S)-2,6-diaminopimelate + H2O = (2S,6S)-2,6-diaminopimelate + succinate. It participates in amino-acid biosynthesis; L-lysine biosynthesis via DAP pathway; LL-2,6-diaminopimelate from (S)-tetrahydrodipicolinate (succinylase route): step 3/3. Its function is as follows. Catalyzes the hydrolysis of N-succinyl-L,L-diaminopimelic acid (SDAP), forming succinate and LL-2,6-diaminopimelate (DAP), an intermediate involved in the bacterial biosynthesis of lysine and meso-diaminopimelic acid, an essential component of bacterial cell walls. The protein is Succinyl-diaminopimelate desuccinylase of Gluconobacter oxydans (strain 621H) (Gluconobacter suboxydans).